The following is a 179-amino-acid chain: Pyridoxal 5'-phosphate synthase subunit PdxT (179 aa).

L-glutamine is bound at residue 48–50; the sequence is GES. Cys-79 (nucleophile) is an active-site residue. L-glutamine-binding positions include Arg-101 and 127–128; that span reads IR. Catalysis depends on charge relay system residues His-163 and Glu-165.

The protein belongs to the glutaminase PdxT/SNO family. As to quaternary structure, in the presence of PdxS, forms a dodecamer of heterodimers. Only shows activity in the heterodimer.

The catalysed reaction is aldehydo-D-ribose 5-phosphate + D-glyceraldehyde 3-phosphate + L-glutamine = pyridoxal 5'-phosphate + L-glutamate + phosphate + 3 H2O + H(+). The enzyme catalyses L-glutamine + H2O = L-glutamate + NH4(+). It participates in cofactor biosynthesis; pyridoxal 5'-phosphate biosynthesis. Its function is as follows. Catalyzes the hydrolysis of glutamine to glutamate and ammonia as part of the biosynthesis of pyridoxal 5'-phosphate. The resulting ammonia molecule is channeled to the active site of PdxS. This chain is Pyridoxal 5'-phosphate synthase subunit PdxT, found in Francisella philomiragia subsp. philomiragia (strain ATCC 25017 / CCUG 19701 / FSC 153 / O#319-036).